The chain runs to 110 residues: Insulin (110 aa).

Residues 1 to 24 (MALWMRLLPLLVLLALWGPDPASA) form the signal peptide. 3 disulfide bridges follow: Cys-31–Cys-96, Cys-43–Cys-109, and Cys-95–Cys-100. Residues 57–87 (EAEDLQVGQVELGGGPGAGSLQPLALEGSLQ) constitute a propeptide, c peptide.

This sequence belongs to the insulin family. As to quaternary structure, heterodimer of a B chain and an A chain linked by two disulfide bonds.

The protein localises to the secreted. Its function is as follows. Insulin decreases blood glucose concentration. It increases cell permeability to monosaccharides, amino acids and fatty acids. It accelerates glycolysis, the pentose phosphate cycle, and glycogen synthesis in liver. The sequence is that of Insulin (INS) from Pan troglodytes (Chimpanzee).